Here is a 258-residue protein sequence, read N- to C-terminus: Imidazole glycerol phosphate synthase subunit HisF (258 aa).

Residues Asp-11 and Asp-130 contribute to the active site.

This sequence belongs to the HisA/HisF family. Heterodimer of HisH and HisF.

The protein localises to the cytoplasm. The catalysed reaction is 5-[(5-phospho-1-deoxy-D-ribulos-1-ylimino)methylamino]-1-(5-phospho-beta-D-ribosyl)imidazole-4-carboxamide + L-glutamine = D-erythro-1-(imidazol-4-yl)glycerol 3-phosphate + 5-amino-1-(5-phospho-beta-D-ribosyl)imidazole-4-carboxamide + L-glutamate + H(+). The protein operates within amino-acid biosynthesis; L-histidine biosynthesis; L-histidine from 5-phospho-alpha-D-ribose 1-diphosphate: step 5/9. Its function is as follows. IGPS catalyzes the conversion of PRFAR and glutamine to IGP, AICAR and glutamate. The HisF subunit catalyzes the cyclization activity that produces IGP and AICAR from PRFAR using the ammonia provided by the HisH subunit. In Yersinia pseudotuberculosis serotype O:3 (strain YPIII), this protein is Imidazole glycerol phosphate synthase subunit HisF.